The chain runs to 85 residues: WAP four-disulfide core domain protein 12 (85 aa).

An N-terminal signal peptide occupies residues 1–21 (MWPNSILVLMTLLISSTLVTG). Positions 25–72 (KGEEKRVCPPDYVRCIRQDDPQCYSDNDCGDQEICCFWQCGFKCVLPV) constitute a WAP domain. Intrachain disulfides connect cysteine 32–cysteine 60, cysteine 39–cysteine 64, cysteine 47–cysteine 59, and cysteine 53–cysteine 68.

As to expression, constitutively expressed in tongue.

Its subcellular location is the secreted. Functionally, antibacterial protein which inhibits the growth of E.coli and S.aureus. Putative acid-stable proteinase inhibitor. This Mus musculus (Mouse) protein is WAP four-disulfide core domain protein 12.